A 420-amino-acid chain; its full sequence is MLISRPRGTSDLLPGDTARWQRVEAVIRDLCRVYGYGEIRTPLFEATELFQRGVGDITDIVEKEMYTFTDKGGRSLTLRPEGTAPVTRAYLENGLHAVPQPVKLFYVGPMFRYDRPQAGRYRQFHQFGVEIFGAADPAADAEVIALAMHFFDRLGLAGLELHLNSVGCPGCRAVLRRKLADYFEPRADELCANCRGRLRKNPLRLLDCKEERCREAGRGAPVPVDYLCPECGGHFGRVQRYLDLLGISFKLNPCLVRGLDYYTRTAFEILVPGGGAQDAVGGGGRYDGLVSAIGGPAVPGVGFALGLERTLLLWSRQAGEEVLPQGPVVFIATAGETEETATVLLSGLRAAGVPADREYTGRSLKAQMKFAAKLGARWVIIVGKDELEAGEVILRDMGAGLQTRVSLGEVVERLRRDARG.

Belongs to the class-II aminoacyl-tRNA synthetase family. In terms of assembly, homodimer.

It is found in the cytoplasm. It catalyses the reaction tRNA(His) + L-histidine + ATP = L-histidyl-tRNA(His) + AMP + diphosphate + H(+). The polypeptide is Histidine--tRNA ligase (Desulforudis audaxviator (strain MP104C)).